A 106-amino-acid chain; its full sequence is Urease subunit beta (106 aa).

It belongs to the urease beta subunit family. In terms of assembly, heterotrimer of UreA (gamma), UreB (beta) and UreC (alpha) subunits. Three heterotrimers associate to form the active enzyme.

The protein localises to the cytoplasm. The enzyme catalyses urea + 2 H2O + H(+) = hydrogencarbonate + 2 NH4(+). It participates in nitrogen metabolism; urea degradation; CO(2) and NH(3) from urea (urease route): step 1/1. In Synechococcus sp. (strain CC9605), this protein is Urease subunit beta.